A 1034-amino-acid chain; its full sequence is Ice nucleation protein InaU (1034 aa).

The segment at 162 to 993 is octapeptide periodicity; that stretch reads ATYGSTLSGT…LTAGENSVLI (832 aa). 6 disordered regions span residues 260–287, 311–342, 356–383, 407–438, 452–480, and 570–597; these read YGST…KGSD, TQTA…GYGS, YGST…GSDL, and AREG…TGYG. Composition is skewed to polar residues over residues 261-286, 311-334, 357-382, 407-430, 453-480, and 580-592; these read GSTQ…QKGS, TQTA…QKGS, GSTQ…GSDL, and YGST…NSDL.

The protein belongs to the bacterial ice nucleation protein family.

The protein localises to the cell outer membrane. Its function is as follows. Ice nucleation proteins enable bacteria to nucleate crystallization in supercooled water. The chain is Ice nucleation protein InaU (inaU) from Pantoea ananas (Erwinia uredovora).